The chain runs to 381 residues: L-lactate dehydrogenase (381 aa).

Positions 1-380 constitute an FMN hydroxy acid dehydrogenase domain; the sequence is MIISSASDYR…KPEALVDLSK (380 aa). Tyrosine 24 serves as a coordination point for substrate. FMN contacts are provided by serine 106 and glutamine 127. Substrate is bound at residue tyrosine 129. Threonine 155 is an FMN binding site. Residue arginine 164 coordinates substrate. Lysine 251 is a binding site for FMN. Catalysis depends on histidine 275, which acts as the Proton acceptor. Residue arginine 278 participates in substrate binding. Position 306–330 (306–330) interacts with FMN; the sequence is DSGIRNGLDIVRMLALGADATMLGR.

This sequence belongs to the FMN-dependent alpha-hydroxy acid dehydrogenase family. FMN serves as cofactor.

It is found in the cell inner membrane. The catalysed reaction is (S)-lactate + A = pyruvate + AH2. Its function is as follows. Catalyzes the conversion of L-lactate to pyruvate. Is coupled to the respiratory chain. The sequence is that of L-lactate dehydrogenase from Haemophilus influenzae (strain PittEE).